Consider the following 284-residue polypeptide: Phosphatidylglycerol--prolipoprotein diacylglyceryl transferase (284 aa).

7 consecutive transmembrane segments (helical) span residues Leu18–Phe38, Tyr62–Tyr82, Phe106–Tyr126, Leu136–Ile156, Pro190–Ala210, Gly218–Tyr238, and Leu252–Tyr272. Arg155 lines the a 1,2-diacyl-sn-glycero-3-phospho-(1'-sn-glycerol) pocket.

It belongs to the Lgt family.

It is found in the cell inner membrane. The enzyme catalyses L-cysteinyl-[prolipoprotein] + a 1,2-diacyl-sn-glycero-3-phospho-(1'-sn-glycerol) = an S-1,2-diacyl-sn-glyceryl-L-cysteinyl-[prolipoprotein] + sn-glycerol 1-phosphate + H(+). Its pathway is protein modification; lipoprotein biosynthesis (diacylglyceryl transfer). Functionally, catalyzes the transfer of the diacylglyceryl group from phosphatidylglycerol to the sulfhydryl group of the N-terminal cysteine of a prolipoprotein, the first step in the formation of mature lipoproteins. The chain is Phosphatidylglycerol--prolipoprotein diacylglyceryl transferase from Helicobacter pylori (strain G27).